Here is a 492-residue protein sequence, read N- to C-terminus: Catalase isozyme 3 (492 aa).

Residues His65 and Asn138 contribute to the active site. Residue Tyr348 coordinates heme.

Belongs to the catalase family. In terms of assembly, homotetramer. The cofactor is heme.

Its subcellular location is the peroxisome. It carries out the reaction 2 H2O2 = O2 + 2 H2O. In terms of biological role, occurs in almost all aerobically respiring organisms and serves to protect cells from the toxic effects of hydrogen peroxide. This Nicotiana plumbaginifolia (Leadwort-leaved tobacco) protein is Catalase isozyme 3 (CAT3).